Reading from the N-terminus, the 113-residue chain is Insulin-like peptide 02 (113 aa).

An N-terminal signal peptide occupies residues methionine 1 to proline 22. Residues valine 23 to arginine 42 constitute a propeptide that is removed on maturation. Intrachain disulfides connect cysteine 44–cysteine 99, cysteine 56–cysteine 112, and cysteine 98–cysteine 103. A propeptide spans arginine 62–arginine 87 (c peptide).

The protein belongs to the insulin family.

Its subcellular location is the secreted. Functionally, insulin decreases blood glucose concentration. May have evolved to activate insulin receptors (INSR) in vertebrates. Molecular docking studies reveals unique interaction with the human insulin receptor. In vivo, insulin-like peptide injection reduces blood glucose levels in two models of zebrafish diabetes (streptozotocin- and glucose-induced). Also shorter swimming distance of zebrafish larvae, an effect which is not observed with human insulin. The sequence is that of Insulin-like peptide 02 from Exaiptasia diaphana (Tropical sea anemone).